The sequence spans 100 residues: Large ribosomal subunit protein uL23 (100 aa).

Belongs to the universal ribosomal protein uL23 family. As to quaternary structure, part of the 50S ribosomal subunit. Contacts protein L29, and trigger factor when it is bound to the ribosome.

Its function is as follows. One of the early assembly proteins it binds 23S rRNA. One of the proteins that surrounds the polypeptide exit tunnel on the outside of the ribosome. Forms the main docking site for trigger factor binding to the ribosome. This is Large ribosomal subunit protein uL23 from Prochlorococcus marinus (strain MIT 9312).